The sequence spans 206 residues: Small ribosomal subunit protein uS4 (206 aa).

One can recognise an S4 RNA-binding domain in the interval 98–163; it reads MRLDNVVYRL…SEKFKTFVEN (66 aa).

Belongs to the universal ribosomal protein uS4 family. As to quaternary structure, part of the 30S ribosomal subunit. Contacts protein S5. The interaction surface between S4 and S5 is involved in control of translational fidelity.

Its function is as follows. One of the primary rRNA binding proteins, it binds directly to 16S rRNA where it nucleates assembly of the body of the 30S subunit. In terms of biological role, with S5 and S12 plays an important role in translational accuracy. The sequence is that of Small ribosomal subunit protein uS4 from Clostridium botulinum (strain Alaska E43 / Type E3).